Consider the following 542-residue polypeptide: Chaperonin GroEL 2 (542 aa).

Residues 30–33 (TLGP), lysine 51, 87–91 (DGTTT), glycine 415, and aspartate 494 contribute to the ATP site.

The protein belongs to the chaperonin (HSP60) family. In terms of assembly, forms a cylinder of 14 subunits composed of two heptameric rings stacked back-to-back. Interacts with the co-chaperonin GroES.

Its subcellular location is the cytoplasm. It catalyses the reaction ATP + H2O + a folded polypeptide = ADP + phosphate + an unfolded polypeptide.. In terms of biological role, together with its co-chaperonin GroES, plays an essential role in assisting protein folding. The GroEL-GroES system forms a nano-cage that allows encapsulation of the non-native substrate proteins and provides a physical environment optimized to promote and accelerate protein folding. The chain is Chaperonin GroEL 2 from Syntrophobacter fumaroxidans (strain DSM 10017 / MPOB).